Here is a 574-residue protein sequence, read N- to C-terminus: Sorting nexin-33 (574 aa).

The region spanning 1 to 61 (MALKGRALYD…PASYVEIVRP (61 aa)) is the SH3 domain. Serine 77 carries the post-translational modification Phosphoserine. The segment covering 79–90 (GTQGSLYSSPSM) has biased composition (polar residues). The interval 79 to 116 (GTQGSLYSSPSMASPARSGGGSGFLSNPGSFEDDDDDD) is disordered. Serine 92 carries the phosphoserine modification. The PX domain maps to 230–340 (FACSIEDPTK…HFLSCLDDKQ (111 aa)). Residues 371–574 (LQDVEDRVDT…EKTLHMYDHL (204 aa)) enclose the BAR domain.

Belongs to the sorting nexin family. In terms of assembly, homodimer (via BAR domain). Interacts with ADAM15. Interacts with FASLG. Interacts (via SH3 domain) with DNM1 and DNM2. Interacts with WASL. Interacts with FCHSD1 (via the F-BAR domain). Post-translationally, phosphorylated. As to expression, detected in brain (at protein level).

Its subcellular location is the cytoplasm. It is found in the cytosol. The protein localises to the membrane. It localises to the cytoplasmic vesicle membrane. Plays a role in the reorganization of the cytoskeleton, endocytosis and cellular vesicle trafficking via its interactions with membranes, WASL, DNM1 and DNM2. Acts both during interphase and at the end of mitotic cell divisions. Required for efficient progress through mitosis and cytokinesis. Required for normal formation of the cleavage furrow at the end of mitosis. Modulates endocytosis of cell-surface proteins, such as APP and PRNP; this then modulates the secretion of APP and PRNP peptides. Promotes membrane tubulation (in vitro). May promote the formation of macropinosomes. In Mus musculus (Mouse), this protein is Sorting nexin-33 (Snx33).